A 792-amino-acid chain; its full sequence is X-ray radiation resistance-associated protein 1 (792 aa).

LRR repeat units lie at residues D104–N125, A141–I155, L164–G184, H188–A209, A229–A250, and R254–Q275. Disordered stretches follow at residues A490 to C517, T537 to E562, and I577 to G601. Basic and acidic residues predominate over residues S549–S560. A coiled-coil region spans residues H723–S745.

As to expression, expressed predominantly in testis followed by prostate and ovary. Low levels found in other tissues including peripheral blood leukocytes, spleen, thymus, small intestine and colon. Also expressed in neuroblastoma, glioma, breast, lung, leukemia, renal, ovarian, prostate and colorectal cancer cell lines.

It localises to the cytoplasm. The protein resides in the nucleus. Functionally, may be involved in the response of cells to X-ray radiation. This Homo sapiens (Human) protein is X-ray radiation resistance-associated protein 1.